A 338-amino-acid chain; its full sequence is Fructose-1,6-bisphosphatase 1 (338 aa).

Position 2 is an N-acetylthreonine (Thr2). Residues Val18–Gly22 and Thr28–Thr32 each bind AMP. Asp69 and Glu98 together coordinate Mg(2+). Lys113–Tyr114 serves as a coordination point for AMP. Mg(2+)-binding residues include Asp119, Leu121, and Asp122. Position 122–125 (Asp122–Ser125) interacts with substrate. Arg141 serves as a coordination point for AMP. Position 151 is an N6-succinyllysine (Lys151). Ser208 carries the post-translational modification Phosphoserine; by PKA. Substrate-binding positions include Asn213–Tyr216, Arg244–Met249, Tyr265, and Lys275–Arg277. Residues Tyr216, Tyr245, and Tyr265 each carry the phosphotyrosine modification. Glu281 serves as a coordination point for Mg(2+).

This sequence belongs to the FBPase class 1 family. In terms of assembly, homotetramer. Mg(2+) serves as cofactor.

It catalyses the reaction beta-D-fructose 1,6-bisphosphate + H2O = beta-D-fructose 6-phosphate + phosphate. It functions in the pathway carbohydrate biosynthesis; gluconeogenesis. Subject to complex allosteric regulation. The enzyme can assume an active R-state, or an inactive T-state. Intermediate conformations may exist. AMP acts as an allosteric inhibitor. AMP binding affects the turnover of bound substrate and not the affinity for substrate. Fructose 2,6-bisphosphate acts as a competitive inhibitor. Fructose 2,6-bisphosphate and AMP have synergistic effects. In terms of biological role, catalyzes the hydrolysis of fructose 1,6-bisphosphate to fructose 6-phosphate in the presence of divalent cations, acting as a rate-limiting enzyme in gluconeogenesis. Plays a role in regulating glucose sensing and insulin secretion of pancreatic beta-cells. Appears to modulate glycerol gluconeogenesis in liver. Important regulator of appetite and adiposity; increased expression of the protein in liver after nutrient excess increases circulating satiety hormones and reduces appetite-stimulating neuropeptides and thus seems to provide a feedback mechanism to limit weight gain. This is Fructose-1,6-bisphosphatase 1 (FBP1) from Sus scrofa (Pig).